The following is a 427-amino-acid chain: 3-phosphoshikimate 1-carboxyvinyltransferase (427 aa).

3-phosphoshikimate is bound by residues Lys20, Ser21, and Arg25. Residue Lys20 participates in phosphoenolpyruvate binding. Phosphoenolpyruvate-binding residues include Gly92 and Arg120. Residues Ser166, Gln168, Asp312, and Lys339 each contribute to the 3-phosphoshikimate site. Gln168 contacts phosphoenolpyruvate. The active-site Proton acceptor is Asp312. The phosphoenolpyruvate site is built by Arg343 and Arg385.

This sequence belongs to the EPSP synthase family. Monomer.

Its subcellular location is the cytoplasm. The enzyme catalyses 3-phosphoshikimate + phosphoenolpyruvate = 5-O-(1-carboxyvinyl)-3-phosphoshikimate + phosphate. The protein operates within metabolic intermediate biosynthesis; chorismate biosynthesis; chorismate from D-erythrose 4-phosphate and phosphoenolpyruvate: step 6/7. Functionally, catalyzes the transfer of the enolpyruvyl moiety of phosphoenolpyruvate (PEP) to the 5-hydroxyl of shikimate-3-phosphate (S3P) to produce enolpyruvyl shikimate-3-phosphate and inorganic phosphate. This chain is 3-phosphoshikimate 1-carboxyvinyltransferase, found in Streptococcus pyogenes serotype M49 (strain NZ131).